The following is a 159-amino-acid chain: Sumo-conjugating enzyme ubc9 (159 aa).

In terms of domain architecture, UBC core spans 4–157; the sequence is ISSARLSEER…VKAQSKVYPP (154 aa). Residue Cys93 is the Glycyl thioester intermediate of the active site.

It belongs to the ubiquitin-conjugating enzyme family.

The protein resides in the nucleus. It functions in the pathway protein modification; protein sumoylation. In terms of biological role, accepts the ubiquitin-like protein sumo from the E1 complex and catalyzes its covalent attachment to other proteins with the help of an E3 ligase. The protein is Sumo-conjugating enzyme ubc9 (ubc9) of Dictyostelium discoideum (Social amoeba).